The following is a 422-amino-acid chain: Golgi-associated RAB2 interactor protein 2 (422 aa).

Positions 353-404 (PVESEANTSKEMKDKTSEEKMPDFQSTALKAEESRSLRTESNTSVLSPHIKS) are disordered. The segment covering 360–374 (TSKEMKDKTSEEKMP) has biased composition (basic and acidic residues).

This sequence belongs to the GARIN family. In terms of assembly, interacts with CALM1. Expressed in spermatozoa (at protein level).

It localises to the cell projection. The protein localises to the cilium. The protein resides in the flagellum. Seems to play a role in sperm motility. The sequence is that of Golgi-associated RAB2 interactor protein 2 from Homo sapiens (Human).